Reading from the N-terminus, the 130-residue chain is Large ribosomal subunit protein bL12 (130 aa).

This sequence belongs to the bacterial ribosomal protein bL12 family. As to quaternary structure, homodimer. Part of the ribosomal stalk of the 50S ribosomal subunit. Forms a multimeric L10(L12)X complex, where L10 forms an elongated spine to which 2 to 4 L12 dimers bind in a sequential fashion. Binds GTP-bound translation factors.

In terms of biological role, forms part of the ribosomal stalk which helps the ribosome interact with GTP-bound translation factors. Is thus essential for accurate translation. The chain is Large ribosomal subunit protein bL12 from Mycolicibacterium gilvum (strain PYR-GCK) (Mycobacterium gilvum (strain PYR-GCK)).